Here is a 189-residue protein sequence, read N- to C-terminus: Resolvase (189 aa).

The Resolvase/invertase-type recombinase catalytic domain maps to 1–139 (MLVGYARVST…EGLKSAKARG (139 aa)). S9 serves as the catalytic O-(5'-phospho-DNA)-serine intermediate. Residues 130-151 (EGLKSAKARGRNGGRPSKRNDK) are disordered. The segment at residues 165 to 184 (IVDIVKQTGLSRATVYRVLN) is a DNA-binding region (H-T-H motif).

This sequence belongs to the site-specific recombinase resolvase family.

Functionally, a likely role for the res protein would be to stabilize pIP404 by reducing the number of plasmid multimers resulting from homologous recombination. The sequence is that of Resolvase (res) from Clostridium perfringens.